The sequence spans 146 residues: D-aminoacyl-tRNA deacylase (146 aa).

Residues 137–138 (GP) carry the Gly-cisPro motif, important for rejection of L-amino acids motif.

The protein belongs to the DTD family. In terms of assembly, homodimer.

The protein resides in the cytoplasm. It catalyses the reaction glycyl-tRNA(Ala) + H2O = tRNA(Ala) + glycine + H(+). The catalysed reaction is a D-aminoacyl-tRNA + H2O = a tRNA + a D-alpha-amino acid + H(+). An aminoacyl-tRNA editing enzyme that deacylates mischarged D-aminoacyl-tRNAs. Also deacylates mischarged glycyl-tRNA(Ala), protecting cells against glycine mischarging by AlaRS. Acts via tRNA-based rather than protein-based catalysis; rejects L-amino acids rather than detecting D-amino acids in the active site. By recycling D-aminoacyl-tRNA to D-amino acids and free tRNA molecules, this enzyme counteracts the toxicity associated with the formation of D-aminoacyl-tRNA entities in vivo and helps enforce protein L-homochirality. This Cellvibrio japonicus (strain Ueda107) (Pseudomonas fluorescens subsp. cellulosa) protein is D-aminoacyl-tRNA deacylase.